The sequence spans 107 residues: Flagellar transcriptional regulator FlhD (107 aa).

This sequence belongs to the FlhD family. Homodimer; disulfide-linked. Forms a heterohexamer composed of two FlhC and four FlhD subunits. Each FlhC binds a FlhD dimer, forming a heterotrimer, and a hexamer assembles by dimerization of two heterotrimers.

Its subcellular location is the cytoplasm. In terms of biological role, functions in complex with FlhC as a master transcriptional regulator that regulates transcription of several flagellar and non-flagellar operons by binding to their promoter region. Activates expression of class 2 flagellar genes, including fliA, which is a flagellum-specific sigma factor that turns on the class 3 genes. Also regulates genes whose products function in a variety of physiological pathways. In Bordetella bronchiseptica (strain ATCC BAA-588 / NCTC 13252 / RB50) (Alcaligenes bronchisepticus), this protein is Flagellar transcriptional regulator FlhD.